We begin with the raw amino-acid sequence, 245 residues long: Phosducin (245 aa).

Over residues 1-14 (MEEAKSQSLEEDFE) the composition is skewed to acidic residues. A disordered region spans residues 1-68 (MEEAKSQSLE…RDNKDSKERF (68 aa)). Positions 1 to 241 (MEEAKSQSLE…THALDQTNME (241 aa)) constitute a Phosducin domain. Basic and acidic residues predominate over residues 59 to 68 (RDNKDSKERF). Position 73 is a phosphoserine; by PKA (Ser73). A thioredoxin fold region spans residues 111–245 (YGFVYELETG…DQTNMEEDIE (135 aa)).

This sequence belongs to the phosducin family. As to quaternary structure, interacts with CRX. Forms a complex with the beta and gamma subunits of the GTP-binding protein, transducin. Light-induced changes in cyclic nucleotide levels modulate the phosphorylation of this protein by cAMP kinase.

The protein localises to the cytoplasm. It is found in the cytosol. Its subcellular location is the nucleus. The protein resides in the cell projection. It localises to the cilium. The protein localises to the photoreceptor outer segment. It is found in the photoreceptor inner segment. Inhibits the transcriptional activation activity of the cone-rod homeobox CRX. May participate in the regulation of visual phototransduction or in the integration of photoreceptor metabolism. This chain is Phosducin (PDC), found in Felis catus (Cat).